The chain runs to 212 residues: ATP-dependent dethiobiotin synthetase BioD (212 aa).

13–18 (GIGKTV) is an ATP binding site. Mg(2+) is bound at residue T17. K33 is a catalytic residue. Residue S37 participates in substrate binding. E100 serves as a coordination point for Mg(2+). Residues 100–103 (EGAG) and 184–186 (PRL) contribute to the ATP site.

This sequence belongs to the dethiobiotin synthetase family. In terms of assembly, homodimer. Mg(2+) serves as cofactor.

The protein localises to the cytoplasm. It carries out the reaction (7R,8S)-7,8-diammoniononanoate + CO2 + ATP = (4R,5S)-dethiobiotin + ADP + phosphate + 3 H(+). It participates in cofactor biosynthesis; biotin biosynthesis; biotin from 7,8-diaminononanoate: step 1/2. Functionally, catalyzes a mechanistically unusual reaction, the ATP-dependent insertion of CO2 between the N7 and N8 nitrogen atoms of 7,8-diaminopelargonic acid (DAPA, also called 7,8-diammoniononanoate) to form a ureido ring. The polypeptide is ATP-dependent dethiobiotin synthetase BioD (Rhodopseudomonas palustris (strain ATCC BAA-98 / CGA009)).